A 411-amino-acid polypeptide reads, in one-letter code: Heparan-sulfate 6-O-sulfotransferase 1 (411 aa).

Residues 1–19 (MRRRRAGGRTMVERASKFV) lie on the Cytoplasmic side of the membrane. Residues 20 to 37 (LVVAGSACFMLILYQYAG) form a helical; Signal-anchor for type II membrane protein membrane-spanning segment. At 38–411 (PGLSLGAPGG…DYMSHIIEKW (374 aa)) the chain is on the lumenal side. 93–101 (HIQKTGGTT) contributes to the 3'-phosphoadenylyl sulfate binding site. Substrate-binding positions include 123-124 (KK), R140, W145, and H150. The active-site Proton acceptor is the H150. The 3'-phosphoadenylyl sulfate site is built by R185 and S193. Residues H197 and W204 each contribute to the substrate site. Residue N264 is glycosylated (N-linked (GlcNAc...) asparagine). Position 317–319 (317–319 (MQY)) interacts with 3'-phosphoadenylyl sulfate. An N-linked (GlcNAc...) asparagine glycan is attached at N320. 323–324 (RA) contacts 3'-phosphoadenylyl sulfate. A coiled-coil region spans residues 352 to 386 (KDLFQQRYQYKRQLERREQRLRNREERLLHRSKEA). The tract at residues 380–401 (LHRSKEALPREDPEEPGRVPTE) is disordered.

The protein belongs to the sulfotransferase 6 family. Post-translationally, N-glycosylated. In terms of tissue distribution, expressed in fetal brain and liver.

Its subcellular location is the membrane. It carries out the reaction alpha-D-glucosaminyl-[heparan sulfate](n) + 3'-phosphoadenylyl sulfate = 6-sulfo-alpha-D-glucosaminyl-[heparan sulfate](n) + adenosine 3',5'-bisphosphate + H(+). Its function is as follows. 6-O-sulfation enzyme which catalyzes the transfer of sulfate from 3'-phosphoadenosine 5'-phosphosulfate (PAPS) to position 6 of the N-sulfoglucosamine residue (GlcNS) of heparan sulfate. Critical for normal neuronal development where it may play a role in neuron branching. May also play a role in limb development. May prefer iduronic acid. In Mus musculus (Mouse), this protein is Heparan-sulfate 6-O-sulfotransferase 1.